A 47-amino-acid polypeptide reads, in one-letter code: Defensin Ec-AMP-D1 (47 aa).

4 disulfides stabilise this stretch: Cys-3–Cys-47, Cys-14–Cys-34, Cys-20–Cys-41, and Cys-24–Cys-43.

Functionally, has antifungal activity. Inhibits spore germination in F.graminearum (IC(50)=15 ug/ml), F.oxysporum (IC(50)=102 ug/ml), F.verticillioides (IC(50)=8.5 ug/ml) and D.maydis (IC(50)=12.5 ug/ml), but not in C.graminicola, B.cinerea and H.sativum at concentrations below 30 ug/ml. Inhibits hyphal development in P.infestans (IC(50)=25.5 ug/ml), but not release of zoospores. At concentrations above 100 ug/ml, induces morphological changes such as lysis of hyphae and sporangia in P.infestans. The protein is Defensin Ec-AMP-D1 of Echinochloa crus-galli (Barnyard grass).